Here is a 418-residue protein sequence, read N- to C-terminus: Trans-acting enoyl reductase (418 aa).

It belongs to the saccharopine dehydrogenase family. Enoyl reductase subfamily.

Its function is as follows. Involved in the reduction of the double bond between C-4 and C-5 during phthiocerol dimycocerosates (DIM A) and glycosylated phenolphthiocerol dimycocerosates (PGL) biosynthesis. This is Trans-acting enoyl reductase from Mycobacterium ulcerans (strain Agy99).